Reading from the N-terminus, the 354-residue chain is Neuronal growth regulator 1 (354 aa).

The N-terminal stretch at 1 to 37 (MDMMLLVQGACCSNQWLAAVLLSLCCLLPSCLPAGQS) is a signal peptide. 3 consecutive Ig-like C2-type domains span residues 38 to 134 (VDFP…VHLT), 139 to 221 (PKIY…KVVV), and 225 to 313 (PTIQ…LPLN). The cysteines at positions 60 and 118 are disulfide-linked. Asn-73 and Asn-155 each carry an N-linked (GlcNAc...) asparagine glycan. 2 cysteine pairs are disulfide-bonded: Cys-160-Cys-203 and Cys-245-Cys-297. At Tyr-187 the chain carries Phosphotyrosine. Residues Asn-275, Asn-286, Asn-294, and Asn-307 are each glycosylated (N-linked (GlcNAc...) asparagine). Gly-324 carries the GPI-anchor amidated glycine lipid modification. A propeptide spans 325–354 (SADVLFSCWYLVLTLSSFTSIFYLKNAILQ) (removed in mature form).

This sequence belongs to the immunoglobulin superfamily. IgLON family.

The protein resides in the cell membrane. In terms of biological role, may be involved in cell-adhesion. May function as a trans-neural growth-promoting factor in regenerative axon sprouting in the mammalian brain. In Homo sapiens (Human), this protein is Neuronal growth regulator 1 (NEGR1).